A 263-amino-acid chain; its full sequence is Probable WRKY transcription factor 62 (263 aa).

The disordered stretch occupies residues 59–104 (DHQDDQSNNSSPQDSSPVLESSRKPLHKRGRKTSMAESSDYHRHES). The span at 64-74 (QSNNSSPQDSS) shows a compositional bias: low complexity. Residues 104 to 174 (SSTPIYHDGF…GQHICQLHQA (71 aa)) constitute a DNA-binding region (WRKY).

This sequence belongs to the WRKY group III family.

Its subcellular location is the nucleus. In terms of biological role, transcription factor. Interacts specifically with the W box (5'-(T)TGAC[CT]-3'), a frequently occurring elicitor-responsive cis-acting element. In Arabidopsis thaliana (Mouse-ear cress), this protein is Probable WRKY transcription factor 62 (WRKY62).